We begin with the raw amino-acid sequence, 896 residues long: Translation initiation factor IF-2 (896 aa).

Residues 93–219 show a composition bias toward basic and acidic residues; the sequence is VKRDPQEAER…RMAEENEKNW (127 aa). The interval 93–307 is disordered; that stretch reads VKRDPQEAER…GSALQQGFQK (215 aa). A compositionally biased stretch (basic residues) spans 256–271; the sequence is GRSRSSKAARPAKKGN. A compositionally biased stretch (basic and acidic residues) spans 272 to 285; sequence KHAESKADREEARA. Residues 395 to 564 form the tr-type G domain; that stretch reads PRAPVVTIMG…LLQAEVLELK (170 aa). A G1 region spans residues 404–411; that stretch reads GHVDHGKT. 404 to 411 is a binding site for GTP; that stretch reads GHVDHGKT. The G2 stretch occupies residues 429 to 433; that stretch reads GITQH. Positions 450–453 are G3; it reads DTPG. GTP contacts are provided by residues 450–454 and 504–507; these read DTPGH and NKID. A G4 region spans residues 504-507; that stretch reads NKID. Positions 540-542 are G5; that stretch reads SAK.

It belongs to the TRAFAC class translation factor GTPase superfamily. Classic translation factor GTPase family. IF-2 subfamily.

Its subcellular location is the cytoplasm. Functionally, one of the essential components for the initiation of protein synthesis. Protects formylmethionyl-tRNA from spontaneous hydrolysis and promotes its binding to the 30S ribosomal subunits. Also involved in the hydrolysis of GTP during the formation of the 70S ribosomal complex. The sequence is that of Translation initiation factor IF-2 from Klebsiella pneumoniae (strain 342).